A 434-amino-acid chain; its full sequence is Ribulose bisphosphate carboxylase-like protein (434 aa).

Mg(2+) is bound by residues Lys-198, Asp-200, and Glu-201. An N6-carboxylysine modification is found at Lys-198.

It belongs to the RuBisCO large chain family. Type IV subfamily. As to quaternary structure, homodimer. Mg(2+) is required as a cofactor.

Functionally, may be involved in sulfur metabolism and oxidative stress response. Does not show RuBisCO activity. This is Ribulose bisphosphate carboxylase-like protein from Chlorobaculum thiosulfatiphilum (Chlorobium limicola f.sp. thiosulfatophilum).